Reading from the N-terminus, the 213-residue chain is N-(5'-phosphoribosyl)anthranilate isomerase (213 aa).

It belongs to the TrpF family.

The enzyme catalyses N-(5-phospho-beta-D-ribosyl)anthranilate = 1-(2-carboxyphenylamino)-1-deoxy-D-ribulose 5-phosphate. The protein operates within amino-acid biosynthesis; L-tryptophan biosynthesis; L-tryptophan from chorismate: step 3/5. The chain is N-(5'-phosphoribosyl)anthranilate isomerase from Leptospira interrogans serogroup Icterohaemorrhagiae serovar copenhageni (strain Fiocruz L1-130).